The primary structure comprises 803 residues: Protein translocase subunit SecA (803 aa).

ATP contacts are provided by residues Gln-100, 118-122, and Asp-508; that span reads GEGKT.

This sequence belongs to the SecA family. Monomer and homodimer. Part of the essential Sec protein translocation apparatus which comprises SecA, SecYEG and auxiliary proteins SecDF. Other proteins may also be involved.

Its subcellular location is the cell membrane. It is found in the cytoplasm. It carries out the reaction ATP + H2O + cellular proteinSide 1 = ADP + phosphate + cellular proteinSide 2.. Functionally, part of the Sec protein translocase complex. Interacts with the SecYEG preprotein conducting channel. Has a central role in coupling the hydrolysis of ATP to the transfer of proteins into and across the cell membrane, serving as an ATP-driven molecular motor driving the stepwise translocation of polypeptide chains across the membrane. The chain is Protein translocase subunit SecA from Leuconostoc mesenteroides subsp. mesenteroides (strain ATCC 8293 / DSM 20343 / BCRC 11652 / CCM 1803 / JCM 6124 / NCDO 523 / NBRC 100496 / NCIMB 8023 / NCTC 12954 / NRRL B-1118 / 37Y).